Here is a 266-residue protein sequence, read N- to C-terminus: MSSPVKKMKKKTTTSPILSPTPHSTQILSLPVDLLISILARVSRLDYPILSLVSKSFRSLIASPELYETRSLLGRTESCLYLCLGIPSDFNPRWFTLCRKPKPSGHVMAAISIPNSRPVHCSGLVAVGSDIYNIGGSIINEHSSSVSILDCRYHTWRDAPNMLVERNSHAANVIDGKIYVAGGSRDSNSSNWMEVFDIKTQTWEPVLNPIADGCDRRIRKSAVIEEAICLFGYKGVGVAYNPRIDKWEAIGEVNYLDLGWVWLLVA.

One can recognise an F-box domain in the interval 24–70; it reads STQILSLPVDLLISILARVSRLDYPILSLVSKSFRSLIASPELYETR. Kelch repeat units follow at residues 130–176, 178–223, and 226–266; these read DIYN…VIDG, IYVA…KSAV, and EAIC…LLVA.

The sequence is that of F-box/kelch-repeat protein At4g39560 from Arabidopsis thaliana (Mouse-ear cress).